Consider the following 79-residue polypeptide: Small ribosomal subunit protein bS18 (79 aa).

It belongs to the bacterial ribosomal protein bS18 family. In terms of assembly, part of the 30S ribosomal subunit. Forms a tight heterodimer with protein bS6.

Binds as a heterodimer with protein bS6 to the central domain of the 16S rRNA, where it helps stabilize the platform of the 30S subunit. The protein is Small ribosomal subunit protein bS18 of Nitrobacter winogradskyi (strain ATCC 25391 / DSM 10237 / CIP 104748 / NCIMB 11846 / Nb-255).